A 659-amino-acid chain; its full sequence is Exocyst complex component 5 (659 aa).

Residues 1 to 58 (MRFEEEIGSLQMLCDQFQNKINTLEKQMNEEKKDYVQKLHRLHEKNGEAIDKMKQLDH) adopt a coiled-coil conformation.

Belongs to the SEC10 family. In terms of assembly, the exocyst complex is composed of sec-3/exoc1, sec-5/exoc2, sec-6/exoc3, sec-8/exoc4, sec-10/exoc5, sec-15/exoc6, exo-70/exoc7 and exo-84/exoc8.

Its function is as follows. Component of the exocyst complex involved in the docking of exocytic vesicles with fusion sites on the plasma membrane. The polypeptide is Exocyst complex component 5 (sec-10) (Caenorhabditis elegans).